The sequence spans 190 residues: Dense granule protein 1 (190 aa).

Residues 1–24 (MVRVSAIVGAAASVFVCLSAGAYA) form the signal peptide. N-linked (GlcNAc...) asparagine glycosylation occurs at N30.

It is found in the secreted. The chain is Dense granule protein 1 (GRA1) from Toxoplasma gondii.